A 170-amino-acid chain; its full sequence is Cytochrome b6-f complex subunit 4 (170 aa).

3 helical membrane-spanning segments follow: residues 46–66 (LLFMFPVVILGTIGVIVGLAV), 105–125 (LLGIALMSAIPVGLLFVPFIE), and 141–161 (TVFLIGTLVTLYLGIGATLPL).

It belongs to the cytochrome b family. PetD subfamily. The 4 large subunits of the cytochrome b6-f complex are cytochrome b6, subunit IV (17 kDa polypeptide, PetD), cytochrome f and the Rieske protein, while the 4 small subunits are PetG, PetL, PetM and PetN. The complex functions as a dimer.

The protein resides in the cellular thylakoid membrane. In terms of biological role, component of the cytochrome b6-f complex, which mediates electron transfer between photosystem II (PSII) and photosystem I (PSI), cyclic electron flow around PSI, and state transitions. The polypeptide is Cytochrome b6-f complex subunit 4 (Synechococcus sp. (strain JA-3-3Ab) (Cyanobacteria bacterium Yellowstone A-Prime)).